A 430-amino-acid polypeptide reads, in one-letter code: Enolase (430 aa).

Glutamine 165 serves as a coordination point for (2R)-2-phosphoglycerate. Glutamate 207 functions as the Proton donor in the catalytic mechanism. The Mg(2+) site is built by aspartate 244, glutamate 287, and aspartate 314. (2R)-2-phosphoglycerate-binding residues include lysine 339, arginine 368, serine 369, and lysine 390. Catalysis depends on lysine 339, which acts as the Proton acceptor.

The protein belongs to the enolase family. In terms of assembly, component of the RNA degradosome, a multiprotein complex involved in RNA processing and mRNA degradation. Requires Mg(2+) as cofactor.

It is found in the cytoplasm. It localises to the secreted. The protein resides in the cell surface. It carries out the reaction (2R)-2-phosphoglycerate = phosphoenolpyruvate + H2O. Its pathway is carbohydrate degradation; glycolysis; pyruvate from D-glyceraldehyde 3-phosphate: step 4/5. Catalyzes the reversible conversion of 2-phosphoglycerate (2-PG) into phosphoenolpyruvate (PEP). It is essential for the degradation of carbohydrates via glycolysis. The protein is Enolase of Stenotrophomonas maltophilia (strain K279a).